Here is a 479-residue protein sequence, read N- to C-terminus: MFSGVVMAWQKAQGCLKESLSKDVYSLWIAPLESVRQENGVVSLAGPDRYFIAFVKQNYLKEIERSLTGVDSSITDVRFLEKKAVPQLRSMMHRTSTSAPTFPVPSVSSASTASTASTASSASSVPRQLRLPSVPKNNASIRALHPRYTFDEFMVGQSNILAESACRAISADADTVGPCLYINSGTGLGKSHLTHAVAHHLLSNSPMTRMHYVTAQQFSAEMVHGIKNNSMDMFKKKYQEDCDILLVEDIHTLKGKKKTQEELNEVLDTLVKSGKRVLLTANAAPRELAGIDGEFRSRMSAGLITSIQAPDIKTRSRIVERKAAGQRLSFDEDMTSYLAQNVRGDVRQIESAITAIGARARLMGGYIDMNLIREVVGSVVGCNQSLSSSLIRDLISAQFQVSVEDLQSRSRKKSISLPRQIAMYLSRKFTEESLAEIGRTYKRDHSTVIHSVKVITDKARRDMSLGAQVNLLSDKVKQI.

The domain I, interacts with DnaA modulators stretch occupies residues 1 to 74; it reads MFSGVVMAWQ…RSLTGVDSSI (74 aa). Positions 74-142 are domain II; sequence ITDVRFLEKK…SVPKNNASIR (69 aa). The tract at residues 143–360 is domain III, AAA+ region; the sequence is ALHPRYTFDE…SAITAIGARA (218 aa). 4 residues coordinate ATP: G187, G189, K190, and S191. A domain IV, binds dsDNA region spans residues 361-479; that stretch reads RLMGGYIDMN…NLLSDKVKQI (119 aa).

Belongs to the DnaA family. As to quaternary structure, oligomerizes as a right-handed, spiral filament on DNA at oriC.

The protein resides in the cytoplasm. Plays an essential role in the initiation and regulation of chromosomal replication. ATP-DnaA binds to the origin of replication (oriC) to initiate formation of the DNA replication initiation complex once per cell cycle. Binds the DnaA box (a 9 base pair repeat at the origin) and separates the double-stranded (ds)DNA. Forms a right-handed helical filament on oriC DNA; dsDNA binds to the exterior of the filament while single-stranded (ss)DNA is stabiized in the filament's interior. The ATP-DnaA-oriC complex binds and stabilizes one strand of the AT-rich DNA unwinding element (DUE), permitting loading of DNA polymerase. After initiation quickly degrades to an ADP-DnaA complex that is not apt for DNA replication. Binds acidic phospholipids. The protein is Chromosomal replication initiator protein DnaA of Desulfotalea psychrophila (strain LSv54 / DSM 12343).